We begin with the raw amino-acid sequence, 228 residues long: Ribonuclease 3 (228 aa).

The RNase III domain occupies 5–127 (LTALQERLKH…LIGAVYLDAG (123 aa)). E40 lines the Mg(2+) pocket. D44 is an active-site residue. Residues D113 and E116 each contribute to the Mg(2+) site. E116 is an active-site residue. Residues 154-224 (DPKTELQEWL…AAAMLIRLKA (71 aa)) form the DRBM domain.

Belongs to the ribonuclease III family. In terms of assembly, homodimer. Mg(2+) is required as a cofactor.

It is found in the cytoplasm. It carries out the reaction Endonucleolytic cleavage to 5'-phosphomonoester.. In terms of biological role, digests double-stranded RNA. Involved in the processing of primary rRNA transcript to yield the immediate precursors to the large and small rRNAs (23S and 16S). Processes some mRNAs, and tRNAs when they are encoded in the rRNA operon. Processes pre-crRNA and tracrRNA of type II CRISPR loci if present in the organism. This Variovorax paradoxus (strain S110) protein is Ribonuclease 3.